The following is a 209-amino-acid chain: Small ribosomal subunit protein uS4 (209 aa).

Residues cysteine 9, cysteine 12, cysteine 26, and cysteine 31 each contribute to the Zn(2+) site. Residues 9–31 (CRLCRREGVKLYLKGERCYSPKC) form a C4-type zinc finger. The S4 RNA-binding domain occupies 100–162 (RLDNVVYRLG…RNLELIRQNL (63 aa)).

It belongs to the universal ribosomal protein uS4 family. In terms of assembly, part of the 30S ribosomal subunit. Contacts protein S5. The interaction surface between S4 and S5 is involved in control of translational fidelity. Zn(2+) serves as cofactor.

In terms of biological role, one of the primary rRNA binding proteins, it binds directly to 16S rRNA where it helps nucleate assembly of the body and platform of the 30S subunit. This Thermus thermophilus (strain ATCC BAA-163 / DSM 7039 / HB27) protein is Small ribosomal subunit protein uS4 (rpsD).